The primary structure comprises 382 residues: MKWTVLLLEYFLVKVLVLLYSADGEAQQLEGFIMLSGSNGSRDEESVSEPPHTEDKCRGYYDVMGQWDPPFVCQTGNYLYCCGTCGFRFCCAYKNSRLDQSTCKNYDTPVWLTGQTPYKKTLDPRHDPTKDKTNLIVYIICGVVAIMALVGIFTKLGLEKAHRPHRESMSRAVASVMQGARQGQHEEAIGMHTQHYDTVQARANNMQAGQINNMMQTHPYPALSQLSHVYEQQQSAKDLNKYASLKAVAAKANGDFLNKQHRHLVELAAKGNLPLHPIRMEHVEPTATYVTEVPCIKQNGQKPKSIKANVSHPAMAYSSNTIANPGMLRSWEAAETAGRRKTYNPRKMCMVEQVNELHTARSHHYLPTQPYFVTNSKAEVTV.

Residues 1 to 26 (MKWTVLLLEYFLVKVLVLLYSADGEA) form the signal peptide. Residues 27-132 (QQLEGFIMLS…DPRHDPTKDK (106 aa)) lie on the Extracellular side of the membrane. An N-linked (GlcNAc...) asparagine glycan is attached at Asn39. Residues 133–153 (TNLIVYIICGVVAIMALVGIF) form a helical membrane-spanning segment. At 154–382 (TKLGLEKAHR…VTNSKAEVTV (229 aa)) the chain is on the cytoplasmic side.

This sequence belongs to the shisa family. SHISA9 subfamily. Component of some AMPA receptors (ionotropic glutamate receptors) complex.

It localises to the cell projection. It is found in the dendritic spine membrane. The protein localises to the synapse. In terms of biological role, regulator of short-term neuronal synaptic plasticity in the dentate gyrus. Associates with AMPA receptors (ionotropic glutamate receptors) in synaptic spines and promotes AMPA receptor desensitization at excitatory synapses. The chain is Protein shisa-9A (shisa9a) from Danio rerio (Zebrafish).